The following is a 95-amino-acid chain: Aspartyl/glutamyl-tRNA(Asn/Gln) amidotransferase subunit C (95 aa).

This sequence belongs to the GatC family. As to quaternary structure, heterotrimer of A, B and C subunits.

It carries out the reaction L-glutamyl-tRNA(Gln) + L-glutamine + ATP + H2O = L-glutaminyl-tRNA(Gln) + L-glutamate + ADP + phosphate + H(+). It catalyses the reaction L-aspartyl-tRNA(Asn) + L-glutamine + ATP + H2O = L-asparaginyl-tRNA(Asn) + L-glutamate + ADP + phosphate + 2 H(+). Its function is as follows. Allows the formation of correctly charged Asn-tRNA(Asn) or Gln-tRNA(Gln) through the transamidation of misacylated Asp-tRNA(Asn) or Glu-tRNA(Gln) in organisms which lack either or both of asparaginyl-tRNA or glutaminyl-tRNA synthetases. The reaction takes place in the presence of glutamine and ATP through an activated phospho-Asp-tRNA(Asn) or phospho-Glu-tRNA(Gln). The polypeptide is Aspartyl/glutamyl-tRNA(Asn/Gln) amidotransferase subunit C (Dehalococcoides mccartyi (strain ATCC BAA-2266 / KCTC 15142 / 195) (Dehalococcoides ethenogenes (strain 195))).